We begin with the raw amino-acid sequence, 94 residues long: Co-chaperonin GroES (94 aa).

Belongs to the GroES chaperonin family. Heptamer of 7 subunits arranged in a ring. Interacts with the chaperonin GroEL.

It localises to the cytoplasm. Functionally, together with the chaperonin GroEL, plays an essential role in assisting protein folding. The GroEL-GroES system forms a nano-cage that allows encapsulation of the non-native substrate proteins and provides a physical environment optimized to promote and accelerate protein folding. GroES binds to the apical surface of the GroEL ring, thereby capping the opening of the GroEL channel. The polypeptide is Co-chaperonin GroES (Exiguobacterium sp. (strain ATCC BAA-1283 / AT1b)).